The chain runs to 376 residues: Branched-chain-amino-acid aminotransferase, cytosolic (376 aa).

Lysine 202 carries the N6-(pyridoxal phosphate)lysine modification.

This sequence belongs to the class-IV pyridoxal-phosphate-dependent aminotransferase family. Pyridoxal 5'-phosphate is required as a cofactor.

It is found in the cytoplasm. The catalysed reaction is L-leucine + 2-oxoglutarate = 4-methyl-2-oxopentanoate + L-glutamate. The enzyme catalyses L-isoleucine + 2-oxoglutarate = (S)-3-methyl-2-oxopentanoate + L-glutamate. It catalyses the reaction L-valine + 2-oxoglutarate = 3-methyl-2-oxobutanoate + L-glutamate. It carries out the reaction a 2-oxocarboxylate + L-methionine = 4-methylsulfanyl-2-oxobutanoate + an L-alpha-amino acid. It functions in the pathway amino-acid biosynthesis; L-isoleucine biosynthesis; L-isoleucine from 2-oxobutanoate: step 4/4. The protein operates within amino-acid biosynthesis; L-leucine biosynthesis; L-leucine from 3-methyl-2-oxobutanoate: step 4/4. It participates in amino-acid biosynthesis; L-valine biosynthesis; L-valine from pyruvate: step 4/4. Its pathway is amino-acid biosynthesis; L-methionine biosynthesis via salvage pathway; L-methionine from S-methyl-5-thio-alpha-D-ribose 1-phosphate: step 6/6. Functionally, cytoplasmic isozyme of branched-chain-amino-acid aminotransferase, which catalyzes the first reaction in the catabolism of the essential branched chain amino acids (BCAAs) leucine, isoleucine, and valine. Catalyzes the formation of methionine from 2-keto-4-methylthiobutyrate (KMTB) in the methionine salvage pathway primarily using BCAAs (leucine, isoleucine, and valine) as well as lysine and proline as the amino donors. Involved in cell cycle regulation. The sequence is that of Branched-chain-amino-acid aminotransferase, cytosolic from Saccharomyces cerevisiae (strain ATCC 204508 / S288c) (Baker's yeast).